Here is a 428-residue protein sequence, read N- to C-terminus: Trigger factor (428 aa).

Positions 163 to 248 (GDTVVIDFEG…VHEVKAKQLP (86 aa)) constitute a PPIase FKBP-type domain.

It belongs to the FKBP-type PPIase family. Tig subfamily.

The protein resides in the cytoplasm. The catalysed reaction is [protein]-peptidylproline (omega=180) = [protein]-peptidylproline (omega=0). Functionally, involved in protein export. Acts as a chaperone by maintaining the newly synthesized protein in an open conformation. Functions as a peptidyl-prolyl cis-trans isomerase. This Geobacillus kaustophilus (strain HTA426) protein is Trigger factor.